Reading from the N-terminus, the 88-residue chain is Small ribosomal subunit protein uS17 (88 aa).

Belongs to the universal ribosomal protein uS17 family. As to quaternary structure, part of the 30S ribosomal subunit.

Functionally, one of the primary rRNA binding proteins, it binds specifically to the 5'-end of 16S ribosomal RNA. The polypeptide is Small ribosomal subunit protein uS17 (Oleidesulfovibrio alaskensis (strain ATCC BAA-1058 / DSM 17464 / G20) (Desulfovibrio alaskensis)).